Here is a 290-residue protein sequence, read N- to C-terminus: Nucleotide-binding protein Xfasm12_0753 (290 aa).

Gly-13–Ser-20 contributes to the ATP binding site. Asp-65–Ser-68 serves as a coordination point for GTP.

Belongs to the RapZ-like family.

Its function is as follows. Displays ATPase and GTPase activities. In Xylella fastidiosa (strain M12), this protein is Nucleotide-binding protein Xfasm12_0753.